Consider the following 613-residue polypeptide: Ethylene response sensor 1 (613 aa).

3 helical membrane-spanning segments follow: residues 23-43, 58-78, and 95-115; these read ISDA…IYFV, FGAF…MFFM, and AVVS…LLSV. Cys-65 and His-69 together coordinate Cu cation. Residues 158–307 form the GAF domain; sequence DRHTILRTTL…NVADQVAVAL (150 aa). A Histidine kinase domain is found at 350 to 589; the sequence is VMNHEMRTPM…SFIIRLGICN (240 aa). His-353 carries the phosphohistidine; by autocatalysis modification.

The protein belongs to the ethylene receptor family. In terms of assembly, homodimer; disulfide-linked. Heteromer with ETR1. Requires Cu cation as cofactor. Autophosphorylated on both His and Ser residues in the presence of manganese. Loss of His autophosphorylation in the presence of both manganese and magnesium. As to expression, expressed in etiolated seedlings, leaves, stems, roots, flowers, embryos, anthers, carpels and ovules.

The protein resides in the endoplasmic reticulum membrane. It catalyses the reaction ATP + protein L-histidine = ADP + protein N-phospho-L-histidine.. Its function is as follows. Ethylene receptor related to bacterial two-component regulators. Acts as a redundant negative regulator of ethylene signaling. The sequence is that of Ethylene response sensor 1 (ERS1) from Arabidopsis thaliana (Mouse-ear cress).